We begin with the raw amino-acid sequence, 144 residues long: MTRALPAPAPTAACPCGAGAYGRCCGPFHAGDAVPATAEQLMRSRYSAYVLHDTAYLRRTWHPSTCPTDLERGEADAPATRWLGLDVKRHTQQDPTHATVEFVARYKVGGRAHRLHETSRFVRLDAGGAESPQGRWLYVDGDLT.

It belongs to the UPF0225 family.

The chain is UPF0225 protein RSc0270 from Ralstonia nicotianae (strain ATCC BAA-1114 / GMI1000) (Ralstonia solanacearum).